The sequence spans 346 residues: Holliday junction branch migration complex subunit RuvB (346 aa).

Positions 1–181 are large ATPase domain (RuvB-L); it reads MSDRNPLIDA…FGIPVRLNFY (181 aa). Residues L20, R21, G62, K65, T66, T67, 128–130, R171, Y181, and R218 contribute to the ATP site; that span reads EDF. Residue T66 coordinates Mg(2+). Residues 182-252 are small ATPAse domain (RuvB-S); sequence TVEELEYIVR…IADEALSRLE (71 aa). The segment at 255-346 is head domain (RuvB-H); sequence NRGLDQLDRR…SQYGLFMEDE (92 aa). The DNA site is built by R291, R310, and R315.

The protein belongs to the RuvB family. Homohexamer. Forms an RuvA(8)-RuvB(12)-Holliday junction (HJ) complex. HJ DNA is sandwiched between 2 RuvA tetramers; dsDNA enters through RuvA and exits via RuvB. An RuvB hexamer assembles on each DNA strand where it exits the tetramer. Each RuvB hexamer is contacted by two RuvA subunits (via domain III) on 2 adjacent RuvB subunits; this complex drives branch migration. In the full resolvosome a probable DNA-RuvA(4)-RuvB(12)-RuvC(2) complex forms which resolves the HJ.

The protein localises to the cytoplasm. The catalysed reaction is ATP + H2O = ADP + phosphate + H(+). Its function is as follows. The RuvA-RuvB-RuvC complex processes Holliday junction (HJ) DNA during genetic recombination and DNA repair, while the RuvA-RuvB complex plays an important role in the rescue of blocked DNA replication forks via replication fork reversal (RFR). RuvA specifically binds to HJ cruciform DNA, conferring on it an open structure. The RuvB hexamer acts as an ATP-dependent pump, pulling dsDNA into and through the RuvAB complex. RuvB forms 2 homohexamers on either side of HJ DNA bound by 1 or 2 RuvA tetramers; 4 subunits per hexamer contact DNA at a time. Coordinated motions by a converter formed by DNA-disengaged RuvB subunits stimulates ATP hydrolysis and nucleotide exchange. Immobilization of the converter enables RuvB to convert the ATP-contained energy into a lever motion, pulling 2 nucleotides of DNA out of the RuvA tetramer per ATP hydrolyzed, thus driving DNA branch migration. The RuvB motors rotate together with the DNA substrate, which together with the progressing nucleotide cycle form the mechanistic basis for DNA recombination by continuous HJ branch migration. Branch migration allows RuvC to scan DNA until it finds its consensus sequence, where it cleaves and resolves cruciform DNA. This is Holliday junction branch migration complex subunit RuvB from Brucella suis (strain ATCC 23445 / NCTC 10510).